Here is an 828-residue protein sequence, read N- to C-terminus: Glycerol-3-phosphate acyltransferase (828 aa).

The HXXXXD motif signature appears at 309–314 (CHRSHI).

The protein belongs to the GPAT/DAPAT family.

The protein resides in the cell inner membrane. It carries out the reaction sn-glycerol 3-phosphate + an acyl-CoA = a 1-acyl-sn-glycero-3-phosphate + CoA. It participates in phospholipid metabolism; CDP-diacylglycerol biosynthesis; CDP-diacylglycerol from sn-glycerol 3-phosphate: step 1/3. The protein is Glycerol-3-phosphate acyltransferase of Pseudomonas putida (strain W619).